The chain runs to 209 residues: uncharacterized protein (209 aa).

Disordered stretches follow at residues 1-80 and 164-197; these read MFVR…PPVE and LPAG…PGME. A compositionally biased stretch (low complexity) spans 178 to 189; that stretch reads SRGSSRSSCSQR.

This is an uncharacterized protein from Homo sapiens (Human).